A 156-amino-acid chain; its full sequence is Cyclic pyranopterin monophosphate synthase (156 aa).

Substrate contacts are provided by residues 75–77 (LCH) and 111–112 (ME). The active site involves Asp126.

It belongs to the MoaC family. Homohexamer; trimer of dimers.

The catalysed reaction is (8S)-3',8-cyclo-7,8-dihydroguanosine 5'-triphosphate = cyclic pyranopterin phosphate + diphosphate. Its pathway is cofactor biosynthesis; molybdopterin biosynthesis. Its function is as follows. Catalyzes the conversion of (8S)-3',8-cyclo-7,8-dihydroguanosine 5'-triphosphate to cyclic pyranopterin monophosphate (cPMP). This is Cyclic pyranopterin monophosphate synthase from Erythrobacter litoralis (strain HTCC2594).